We begin with the raw amino-acid sequence, 115 residues long: Tyrosine-protein phosphatase 23 (115 aa).

Residues 1–115 (WMMIVEQKCR…EIGGDAPMVV (115 aa)) form the Tyrosine-protein phosphatase domain. Position 83 (aspartate 83) interacts with substrate.

This sequence belongs to the protein-tyrosine phosphatase family.

The enzyme catalyses O-phospho-L-tyrosyl-[protein] + H2O = L-tyrosyl-[protein] + phosphate. This Styela plicata (Wrinkled sea squirt) protein is Tyrosine-protein phosphatase 23 (STY-23).